An 87-amino-acid polypeptide reads, in one-letter code: MNSKIFAVLLLLGLLSCVLSDQYCPKSSITACKKMNIRNDCCKDDDCTGGSWCCATPCGNFCKYPTDRPGGKRAAGGKSCKTGYVYY.

An N-terminal signal peptide occupies residues 1–20 (MNSKIFAVLLLLGLLSCVLS). The WAP domain occupies 21–66 (DQYCPKSSITACKKMNIRNDCCKDDDCTGGSWCCATPCGNFCKYPT). 5 disulfides stabilise this stretch: C24-C54, C32-C58, C41-C53, C42-C80, and C47-C62.

This sequence belongs to the venom protein 11 family. 01 (wap-1) subfamily. In terms of processing, contains 5 disulfide bonds. Expressed by the venom gland.

The protein resides in the secreted. Its function is as follows. Has antibacterial activity. This is U15-lycotoxin-Ls1f from Lycosa singoriensis (Wolf spider).